The following is a 152-amino-acid chain: Protein SprT-like (152 aa).

The region spanning 7 to 147 is the SprT-like domain; sequence QRLVEEVSLQ…CGKCKGKLKP (141 aa). A Zn(2+)-binding site is contributed by histidine 67. Glutamate 68 is a catalytic residue. Histidine 71 lines the Zn(2+) pocket.

This sequence belongs to the SprT family. Zn(2+) is required as a cofactor.

Its subcellular location is the cytoplasm. The sequence is that of Protein SprT-like from Bacillus cereus (strain ATCC 14579 / DSM 31 / CCUG 7414 / JCM 2152 / NBRC 15305 / NCIMB 9373 / NCTC 2599 / NRRL B-3711).